The following is a 240-amino-acid chain: Cell division protein FtsQ (240 aa).

Residues 1-7 (MTGPGLR) lie on the Cytoplasmic side of the membrane. The chain crosses the membrane as a helical span at residues 8-28 (LLAGMGLAGALVLGLSLWLHF). Topologically, residues 29 to 240 (DPDQHLPIGS…EADNDGGNAR (212 aa)) are periplasmic. A POTRA domain is found at 34-102 (LPIGSIQITG…DTLEVHVTEP (69 aa)).

The protein belongs to the FtsQ/DivIB family. FtsQ subfamily. In terms of assembly, part of a complex composed of FtsB, FtsL and FtsQ.

The protein resides in the cell inner membrane. Its function is as follows. Essential cell division protein. May link together the upstream cell division proteins, which are predominantly cytoplasmic, with the downstream cell division proteins, which are predominantly periplasmic. May control correct divisome assembly. The protein is Cell division protein FtsQ of Thioalkalivibrio sp. (strain K90mix).